The primary structure comprises 601 residues: Serine/threonine-protein phosphatase 2A 65 kDa regulatory subunit A beta isoform (601 aa).

Alanine 2 is subject to N-acetylalanine. HEAT repeat units lie at residues 20–58, 59–96, 97–135, 136–173, 174–212, 213–251, 252–290, 291–333, 334–372, 373–411, 412–450, 451–489, 490–528, 529–567, and 568–601; these read DSLY…GVER, TRTE…GGPD, FAHC…TPVA, LEAH…ASNA, VKAE…ELDS, VKTE…SQDD, LEAL…GPKI, ALSD…RETV, IMNQ…GKEN, TIEH…GIRQ, LSQS…GVEF, FDEK…GTEW, AQNT…GKEI, TTKQ…DTNA, and LQGE…LALA.

This sequence belongs to the phosphatase 2A regulatory subunit A family. PP2A consists of a common heterodimeric core enzyme, composed of a 36 kDa catalytic subunit (subunit C) and a 65 kDa constant regulatory subunit (PR65 or subunit A), that associates with a variety of regulatory subunits. Proteins that associate with the core dimer include three families of regulatory subunits B (the R2/B/PR55/B55, R3/B''/PR72/PR130/PR59 and R5/B'/B56 families), the 48 kDa variable regulatory subunit, viral proteins, and cell signaling molecules. Interacts with IPO9. Interacts with SGO1. Interacts with RAF1.

Its function is as follows. The PR65 subunit of protein phosphatase 2A serves as a scaffolding molecule to coordinate the assembly of the catalytic subunit and a variable regulatory B subunit. The chain is Serine/threonine-protein phosphatase 2A 65 kDa regulatory subunit A beta isoform (Ppp2r1b) from Rattus norvegicus (Rat).